Reading from the N-terminus, the 109-residue chain is uncharacterized protein (109 aa).

Positions methionine 1 to valine 26 are disordered.

This is an uncharacterized protein from Mycobacterium bovis (strain ATCC BAA-935 / AF2122/97).